The primary structure comprises 268 residues: Hydroxyethylthiazole kinase (268 aa).

Met44 is a substrate binding site. Positions 119 and 165 each coordinate ATP. A substrate-binding site is contributed by Gly192.

The protein belongs to the Thz kinase family. Requires Mg(2+) as cofactor.

The enzyme catalyses 5-(2-hydroxyethyl)-4-methylthiazole + ATP = 4-methyl-5-(2-phosphooxyethyl)-thiazole + ADP + H(+). It participates in cofactor biosynthesis; thiamine diphosphate biosynthesis; 4-methyl-5-(2-phosphoethyl)-thiazole from 5-(2-hydroxyethyl)-4-methylthiazole: step 1/1. In terms of biological role, catalyzes the phosphorylation of the hydroxyl group of 4-methyl-5-beta-hydroxyethylthiazole (THZ). The chain is Hydroxyethylthiazole kinase from Corynebacterium glutamicum (strain R).